We begin with the raw amino-acid sequence, 35 residues long: Photosystem II reaction center protein M (35 aa).

The helical transmembrane segment at 5 to 25 (ILAFIATALFIIIPTAFLLIL) threads the bilayer.

The protein belongs to the PsbM family. PSII is composed of 1 copy each of membrane proteins PsbA, PsbB, PsbC, PsbD, PsbE, PsbF, PsbH, PsbI, PsbJ, PsbK, PsbL, PsbM, PsbT, PsbX, PsbY, PsbZ, Psb30/Ycf12, at least 3 peripheral proteins of the oxygen-evolving complex and a large number of cofactors. It forms dimeric complexes.

It is found in the plastid. The protein localises to the chloroplast thylakoid membrane. One of the components of the core complex of photosystem II (PSII). PSII is a light-driven water:plastoquinone oxidoreductase that uses light energy to abstract electrons from H(2)O, generating O(2) and a proton gradient subsequently used for ATP formation. It consists of a core antenna complex that captures photons, and an electron transfer chain that converts photonic excitation into a charge separation. This subunit is found at the monomer-monomer interface. This chain is Photosystem II reaction center protein M, found in Chara vulgaris (Common stonewort).